Reading from the N-terminus, the 956-residue chain is Pyruvate, phosphate dikinase, chloroplastic (956 aa).

A chloroplast-targeting transit peptide spans 1 to 79; that stretch reads MMSSLFVEGM…AVLNPVSPPV (79 aa). T536 carries the phosphothreonine; by PDRP1 modification. The Tele-phosphohistidine intermediate role is filled by H538. Substrate-binding residues include R644, R701, E830, G851, T852, N853, and D854. A Mg(2+)-binding site is contributed by E830. D854 is a binding site for Mg(2+). C916 (proton donor) is an active-site residue.

The protein belongs to the PEP-utilizing enzyme family. In terms of assembly, homotetramer. It depends on Mg(2+) as a cofactor. Post-translationally, phosphorylation of Thr-536 in the dark inactivates the enzyme. Dephosphorylation upon light stimulation reactivates the enzyme.

It is found in the plastid. The protein resides in the chloroplast. It catalyses the reaction pyruvate + phosphate + ATP = phosphoenolpyruvate + AMP + diphosphate + H(+). Activated by light-induced dephosphorylation. Inhibited by dark-induced phosphorylation. Both reactions are catalyzed by PDRP1. Its function is as follows. Formation of phosphoenolpyruvate. In Flaveria pringlei, this protein is Pyruvate, phosphate dikinase, chloroplastic (PPDK).